We begin with the raw amino-acid sequence, 103 residues long: Histone H4 (103 aa).

Residues 1-14 (MSGRGKGGKGLGKG) show a composition bias toward gly residues. Positions 1–20 (MSGRGKGGKGLGKGGAKRHR) are disordered. K6 is modified (N6-acetyl-N6-methyllysine; alternate). Residues K6, K9, and K13 each carry the N6-acetyllysine; alternate modification. N6-methyllysine; alternate occurs at positions 6, 9, and 13. N6-butyryllysine; alternate is present on residues K9 and K13. K13 carries the N6-acetyl-N6-methyllysine; alternate modification. K17 is modified (N6-acetyllysine). The DNA-binding element occupies 17-21 (KRHRK). N6-succinyllysine is present on K32. Residue R56 is modified to Omega-N-methylarginine. A phosphoserine mark is found at S61 and S65. K78 is subject to N6-succinyllysine. The residue at position 80 (K80) is an N6-acetyllysine. Position 92 is an N6-glutaryllysine (K92).

It belongs to the histone H4 family. As to quaternary structure, the nucleosome is a histone octamer containing two molecules each of H2A, H2B, H3 and H4 assembled in one H3-H4 heterotetramer and two H2A-H2B heterodimers. The octamer wraps approximately 147 bp of DNA. Histone H4 is a component of the UAF (upstream activation factor) complex which consists of UAF30, RRN5, RRN9, RRN10, and histones H3 and H4. In terms of processing, glutarylation at Lys-92 (H4K91glu) destabilizes nucleosomes by promoting dissociation of the H2A-H2B dimers from nucleosomes.

It localises to the nucleus. The protein localises to the chromosome. Its function is as follows. Core component of nucleosome. Nucleosomes wrap and compact DNA into chromatin, limiting DNA accessibility to the cellular machineries which require DNA as a template. Histones thereby play a central role in transcription regulation, DNA repair, DNA replication and chromosomal stability. DNA accessibility is regulated via a complex set of post-translational modifications of histones, also called histone code, and nucleosome remodeling. Component of the UAF (upstream activation factor) complex which interacts with the upstream element of the RNA polymerase I promoter and forms a stable preinitiation complex. Together with SPT15/TBP UAF seems to stimulate basal transcription to a fully activated level. In Saccharomyces cerevisiae (strain ATCC 204508 / S288c) (Baker's yeast), this protein is Histone H4 (HHF1).